An 874-amino-acid chain; its full sequence is Oxysterol-binding protein-related protein 5 (874 aa).

Residues 1–71 (MKEEAFLRRR…PQTPGSATKV (71 aa)) are disordered. Serine 12 bears the Phosphoserine mark. Residues 93-123 (VSKKDALKAQKENYRQEKKRATKQLFSALTD) are a coiled coil. The 118-residue stretch at 126 to 243 (VVIMADSLKI…WLDALELALR (118 aa)) folds into the PH domain. 2 disordered regions span residues 255–277 (QGRD…GLPT) and 299–338 (FSDK…GPWR). A compositionally biased stretch (polar residues) spans 261–277 (QGSSPDASPSSLYGLPT). Residues 299-308 (FSDKSERENA) show a composition bias toward basic and acidic residues. Residues 383–388 (LSRVVL), 445–448 (KPYN), and 477–478 (HH) contribute to the a 1,2-diacyl-sn-glycero-3-phospho-(1D-myo-inositol 4-phosphate) site. Residues 383-388 (LSRVVL) and asparagine 448 contribute to the a 1,2-diacyl-sn-glycero-3-phospho-L-serine site. A 1,2-diacyl-sn-glycero-3-phospho-L-serine is bound at residue serine 503. A compositionally biased stretch (basic and acidic residues) spans 660-684 (GDQHKATQEKSVLEEAQRQRAREHQ). Disordered stretches follow at residues 660–685 (GDQH…EHQQ) and 739–798 (GQTT…GGES). A 1,2-diacyl-sn-glycero-3-phospho-(1D-myo-inositol 4-phosphate)-binding residues include lysine 669, glutamate 673, and arginine 677. Phosphoserine occurs at positions 746 and 749. The span at 754-764 (PSSDRRLRKAS) shows a compositional bias: basic and acidic residues. Positions 765-782 (DQPSGHSQVTESSGSTPE) are enriched in polar residues. The helical transmembrane segment at 855 to 873 (SWFLLCIFLTCQLFINYIL) threads the bilayer.

This sequence belongs to the OSBP family.

The protein localises to the endoplasmic reticulum membrane. In terms of biological role, lipid transporter involved in lipid countertransport between the endoplasmic reticulum and the plasma membrane: specifically exchanges phosphatidylserine with phosphatidylinositol 4-phosphate (PI4P), delivering phosphatidylserine to the plasma membrane in exchange for PI4P, which is degraded by the SAC1/SACM1L phosphatase in the endoplasmic reticulum. Binds phosphatidylserine and PI4P in a mutually exclusive manner. May cooperate with NPC1 to mediate the exit of cholesterol from endosomes/lysosomes. Binds 25-hydroxycholesterol and cholesterol. In Mus musculus (Mouse), this protein is Oxysterol-binding protein-related protein 5 (Osbpl5).